Reading from the N-terminus, the 308-residue chain is Acetyl-coenzyme A carboxylase carboxyl transferase subunit beta (308 aa).

In terms of domain architecture, CoA carboxyltransferase N-terminal spans 25–294; the sequence is VWTKCTSCEQ…PLVVSVNDAP (270 aa). Zn(2+)-binding residues include Cys29, Cys32, Cys48, and Cys51. The C4-type zinc-finger motif lies at 29–51; it reads CTSCEQVLYYAELERNLEVCPKC.

Belongs to the AccD/PCCB family. As to quaternary structure, acetyl-CoA carboxylase is a heterohexamer composed of biotin carboxyl carrier protein (AccB), biotin carboxylase (AccC) and two subunits each of ACCase subunit alpha (AccA) and ACCase subunit beta (AccD). Zn(2+) is required as a cofactor.

The protein localises to the cytoplasm. The enzyme catalyses N(6)-carboxybiotinyl-L-lysyl-[protein] + acetyl-CoA = N(6)-biotinyl-L-lysyl-[protein] + malonyl-CoA. The protein operates within lipid metabolism; malonyl-CoA biosynthesis; malonyl-CoA from acetyl-CoA: step 1/1. In terms of biological role, component of the acetyl coenzyme A carboxylase (ACC) complex. Biotin carboxylase (BC) catalyzes the carboxylation of biotin on its carrier protein (BCCP) and then the CO(2) group is transferred by the transcarboxylase to acetyl-CoA to form malonyl-CoA. The protein is Acetyl-coenzyme A carboxylase carboxyl transferase subunit beta of Vibrio cholerae serotype O1 (strain ATCC 39315 / El Tor Inaba N16961).